We begin with the raw amino-acid sequence, 156 residues long: ATP synthase subunit b (156 aa).

A helical transmembrane segment spans residues 7–29 (LIGQSITFIFFVWFSMKFVWPPI).

The protein belongs to the ATPase B chain family. In terms of assembly, F-type ATPases have 2 components, F(1) - the catalytic core - and F(0) - the membrane proton channel. F(1) has five subunits: alpha(3), beta(3), gamma(1), delta(1), epsilon(1). F(0) has three main subunits: a(1), b(2) and c(10-14). The alpha and beta chains form an alternating ring which encloses part of the gamma chain. F(1) is attached to F(0) by a central stalk formed by the gamma and epsilon chains, while a peripheral stalk is formed by the delta and b chains.

It is found in the cell inner membrane. Its function is as follows. F(1)F(0) ATP synthase produces ATP from ADP in the presence of a proton or sodium gradient. F-type ATPases consist of two structural domains, F(1) containing the extramembraneous catalytic core and F(0) containing the membrane proton channel, linked together by a central stalk and a peripheral stalk. During catalysis, ATP synthesis in the catalytic domain of F(1) is coupled via a rotary mechanism of the central stalk subunits to proton translocation. Component of the F(0) channel, it forms part of the peripheral stalk, linking F(1) to F(0). The polypeptide is ATP synthase subunit b (Thiobacillus denitrificans (strain ATCC 25259 / T1)).